Consider the following 116-residue polypeptide: MSVIIYHNPHCSKSRETLALLENKGIQPIIELYLQKQYSVNELQSIAKKLGIDDVRQMMRTKDELYKSLNLDNLDLSQAELFKAISEHSALIERPIVINGDKAKIGRPPETVLEIL.

The Nucleophile; cysteine thioarsenate intermediate role is filled by Cys-11.

It belongs to the ArsC family.

It carries out the reaction [glutaredoxin]-dithiol + arsenate + glutathione + H(+) = glutathionyl-S-S-[glutaredoxin] + arsenite + H2O. In terms of biological role, involved in resistance to arsenate. Catalyzes the reduction of arsenate [As(V)] to arsenite [As(III)]. The polypeptide is Arsenate reductase (arsC) (Haemophilus influenzae (strain ATCC 51907 / DSM 11121 / KW20 / Rd)).